The sequence spans 506 residues: 2-isopropylmalate synthase (506 aa).

In terms of domain architecture, Pyruvate carboxyltransferase spans 6-267 (IIVFDTTLRD…YTDIVTKEIY (262 aa)). Aspartate 15, histidine 201, histidine 203, and asparagine 237 together coordinate Mn(2+). The tract at residues 391 to 506 (SIQTLSTSSC…LNSYLSMKNR (116 aa)) is regulatory domain.

Belongs to the alpha-IPM synthase/homocitrate synthase family. LeuA type 1 subfamily. In terms of assembly, homodimer. Mn(2+) serves as cofactor.

It is found in the cytoplasm. The catalysed reaction is 3-methyl-2-oxobutanoate + acetyl-CoA + H2O = (2S)-2-isopropylmalate + CoA + H(+). It participates in amino-acid biosynthesis; L-leucine biosynthesis; L-leucine from 3-methyl-2-oxobutanoate: step 1/4. Its function is as follows. Catalyzes the condensation of the acetyl group of acetyl-CoA with 3-methyl-2-oxobutanoate (2-ketoisovalerate) to form 3-carboxy-3-hydroxy-4-methylpentanoate (2-isopropylmalate). This chain is 2-isopropylmalate synthase, found in Campylobacter fetus subsp. fetus (strain 82-40).